The following is a 207-amino-acid chain: Calcipressin-like protein (207 aa).

A required for tax-6 interaction region spans residues 176–181 (PAIIVH).

It belongs to the RCAN family. In terms of assembly, interacts with tax-6 (via catalytic domain); the interaction is calcium-dependent. As to expression, expressed in lateral hypodermal cells, marginal cells of the pharynx, vulva epithelial cells, ventral and dorsal nerve cords and commissures and various neurons in the anterior and posterior regions. Expressed in male tail structures including the diagonal muscles, sensory rays and spicules. Expressed in PHC neurons and most tail neurons and support cells of the phasmid neurons. Also expressed in pharyngeal muscle, head neurons, excretory canal cells and hypodermal seam cells.

Inhibits tax-6/calcineurin A phosphatase activity and thereby negatively regulates calcineurin-mediated functions. Plays a role in modulating temperature-dependent calcium responses in AFD neurons and in addition, also negatively regulates thermotaxis in a tax-6-dependent manner in AFD neurons. In response to changes in intracellular calcium levels may also regulate nuclear translocation of transcriptional regulators such as crtc-1. May play a role in regulating body size. Plays a role in male tail tip morphogenesis. The protein is Calcipressin-like protein of Caenorhabditis elegans.